The sequence spans 354 residues: Pyrimidine monooxygenase RutA (354 aa).

Residues 49-50 (IK), N115, E124, 140-141 (RY), and S189 each bind FMN.

The protein belongs to the NtaA/SnaA/DszA monooxygenase family. RutA subfamily.

The catalysed reaction is uracil + FMNH2 + NADH + O2 = (Z)-3-ureidoacrylate + FMN + NAD(+) + H2O + H(+). It carries out the reaction thymine + FMNH2 + NADH + O2 = (Z)-2-methylureidoacrylate + FMN + NAD(+) + H2O + H(+). Functionally, catalyzes the pyrimidine ring opening between N-3 and C-4 by an unusual flavin hydroperoxide-catalyzed mechanism, adding oxygen atoms in the process to yield ureidoacrylate peracid, that immediately reacts with FMN forming ureidoacrylate and FMN-N(5)-oxide. The FMN-N(5)-oxide reacts spontaneously with NADH to produce FMN. Requires the flavin reductase RutF to regenerate FMN in vivo. This is Pyrimidine monooxygenase RutA from Caulobacter sp. (strain K31).